The primary structure comprises 288 residues: uncharacterized protein (288 aa).

NAD(+) contacts are provided by residues 6–20 (GFIGLGVMGKSMASH) and Thr97. Lys172 is an active-site residue. NAD(+) is bound at residue Lys240.

The protein belongs to the HIBADH-related family.

Its subcellular location is the cell membrane. The protein resides in the membrane raft. This is an uncharacterized protein from Bacillus subtilis (strain 168).